A 133-amino-acid polypeptide reads, in one-letter code: Glycine cleavage system H protein (133 aa).

Positions 24-106 (IATIGISAYA…YGDGWLLKVR (83 aa)) constitute a Lipoyl-binding domain. Lys-65 carries the post-translational modification N6-lipoyllysine.

Belongs to the GcvH family. The glycine cleavage system is composed of four proteins: P, T, L and H. It depends on (R)-lipoate as a cofactor.

In terms of biological role, the glycine cleavage system catalyzes the degradation of glycine. The H protein shuttles the methylamine group of glycine from the P protein to the T protein. The sequence is that of Glycine cleavage system H protein from Crocosphaera subtropica (strain ATCC 51142 / BH68) (Cyanothece sp. (strain ATCC 51142)).